We begin with the raw amino-acid sequence, 932 residues long: Myelin gene regulatory factor-like A (932 aa).

2 stretches are compositionally biased toward low complexity: residues 1–19 (MDGY…QQHQ) and 33–48 (QQQQ…QQQQ). 7 disordered regions span residues 1–63 (MDGY…ISNG), 152–256 (VNSP…LSSS), 269–328 (TNTQ…NENP), 540–568 (VTPP…SNNM), 582–601 (TMNI…LSQL), 613–660 (TQNH…NNNN), and 680–726 (NINN…CHWN). Residues 49–59 (PMNGSNNQLLG) show a composition bias toward polar residues. Residues 127-154 (LDSSFLMLQQQLQDQQQQIAQFNSSVNS) are a coiled coil. 2 stretches are compositionally biased toward low complexity: residues 152-249 (VNSP…ANNT) and 277-294 (PRSI…TNSP). Positions 286–546 (PNLSPTNSPI…ATQVTPPGDL (261 aa)) form a DNA-binding region, NDT80. Positions 311–328 (ENENSDPPSPMTQYNENP) are enriched in polar residues. Low complexity-rich tracts occupy residues 615–660 (NHNN…NNNN) and 680–721 (NINN…NNNN). The Peptidase S74 domain occupies 767–877 (SDLRIKYDLK…KQMDEMKLKL (111 aa)). Residues 863–895 (TQELSKQMDEMKLKLITYESKLKNLKKKSKNQT) are a coiled coil. A helical membrane pass occupies residues 895 to 915 (TILLIIFMITFLLVALYMYKP).

It localises to the membrane. Transcription factor which acts as a key regulator of pstA (prestalk-A) cells differentiation. Essential for ecmA-specific gene expression. This Dictyostelium discoideum (Social amoeba) protein is Myelin gene regulatory factor-like A (mrfA).